A 460-amino-acid polypeptide reads, in one-letter code: MKEIDKYAGKNILVLGLGRSGFAVSKLLLKLGARLTLNDKADLAADPKAKQLADLGVRVIGGSHPVDLFDEEKFDYLVKNPGIPYENPMVAKASEKGVPIITEPEVALSASESPYVCVTGSNGKTTTVMLTQQIMDHYLQKQGHHAYAVGNIGWPISEVVLNQAGPDDLLVVEMSSFQLMGVTDIEPKVAAIVDIYNNVHLDYHKTFDNYVDAKLNVGRFQKTSDYFLANFDQKDILAREEKATKAKILTFSENDPVADFYIGQDYLMHGEEKMMKIADIKLPGIHNLQNSLVAIGISSLMGAGKDDIAAVLSTFTGAEHRLQYVTTLDGVKVYNDSKSTNIEAATVAIQSFKQPEVLLAGGLDRGFVFDSLVDLFKKHVKAIVTYGETRYLLADAARKAGIKTIVVVDNLHEGVKAASKLAEAGDVLLFSPACASWDQFKTFEERGEYFVKYVKELEEK.

Residue 120 to 126 (GSNGKTT) participates in ATP binding.

This sequence belongs to the MurCDEF family.

Its subcellular location is the cytoplasm. The catalysed reaction is UDP-N-acetyl-alpha-D-muramoyl-L-alanine + D-glutamate + ATP = UDP-N-acetyl-alpha-D-muramoyl-L-alanyl-D-glutamate + ADP + phosphate + H(+). It participates in cell wall biogenesis; peptidoglycan biosynthesis. Functionally, cell wall formation. Catalyzes the addition of glutamate to the nucleotide precursor UDP-N-acetylmuramoyl-L-alanine (UMA). The polypeptide is UDP-N-acetylmuramoylalanine--D-glutamate ligase (Lactobacillus delbrueckii subsp. bulgaricus (strain ATCC BAA-365 / Lb-18)).